Consider the following 898-residue polypeptide: Protein kintoun (898 aa).

Disordered regions lie at residues 558-680 (GELK…VESD) and 765-822 (ILGQ…SGIS). Over residues 575–602 (INTRTVEDDTKVAKENVKKVDQETAHEG) the composition is skewed to basic and acidic residues. The segment covering 603-616 (KKSKKNQRRKNKKR) has biased composition (basic residues). Residues 641–656 (NEANSFEGTGSSSEAT) are compositionally biased toward polar residues.

Belongs to the PIH1 family. Kintoun subfamily.

It localises to the cytoplasm. Functionally, required for cytoplasmic pre-assembly of axonemal dyneins, thereby playing a central role in motility in cilia and flagella. Involved in pre-assembly of dynein arm complexes in the cytoplasm before intraflagellar transport loads them for the ciliary compartment. The sequence is that of Protein kintoun from Aedes aegypti (Yellowfever mosquito).